A 249-amino-acid polypeptide reads, in one-letter code: Transcriptional activator protein EsaR (249 aa).

The 66-residue stretch at 174–239 (QSADKTIFSS…QAIRLGVELD (66 aa)) folds into the HTH luxR-type domain. Residues 198 to 217 (YAEIAAITGISVSTVKFHIK) constitute a DNA-binding region (H-T-H motif).

It belongs to the autoinducer-regulated transcriptional regulatory protein family.

Functions as a potential OhlL-responsive transcriptional regulator. In Pantoea stewartii subsp. stewartii (Erwinia stewartii), this protein is Transcriptional activator protein EsaR (esaR).